Reading from the N-terminus, the 155-residue chain is 6,7-dimethyl-8-ribityllumazine synthase (155 aa).

Residues W23, 57–59 (AWE), and 81–83 (CVI) contribute to the 5-amino-6-(D-ribitylamino)uracil site. Position 86 to 87 (86 to 87 (DT)) interacts with (2S)-2-hydroxy-3-oxobutyl phosphate. The active-site Proton donor is the H89. Position 114 (N114) interacts with 5-amino-6-(D-ribitylamino)uracil. Position 128 (R128) interacts with (2S)-2-hydroxy-3-oxobutyl phosphate.

It belongs to the DMRL synthase family. Forms an icosahedral capsid composed of 60 subunits, arranged as a dodecamer of pentamers.

It carries out the reaction (2S)-2-hydroxy-3-oxobutyl phosphate + 5-amino-6-(D-ribitylamino)uracil = 6,7-dimethyl-8-(1-D-ribityl)lumazine + phosphate + 2 H2O + H(+). It participates in cofactor biosynthesis; riboflavin biosynthesis; riboflavin from 2-hydroxy-3-oxobutyl phosphate and 5-amino-6-(D-ribitylamino)uracil: step 1/2. Catalyzes the formation of 6,7-dimethyl-8-ribityllumazine by condensation of 5-amino-6-(D-ribitylamino)uracil with 3,4-dihydroxy-2-butanone 4-phosphate. This is the penultimate step in the biosynthesis of riboflavin. In Stenotrophomonas maltophilia (strain K279a), this protein is 6,7-dimethyl-8-ribityllumazine synthase.